The primary structure comprises 127 residues: MTPKKGKKRVKKNIATGIVHIASTFNNTMITICDASGNVISWSSAGARGFKGSRKSTPFAAQVAAGDAAAKAMEHGLKTVSVVVKGPGAGRESALRALSAAGLKITLIRDVTPIPHNGCRPPKRRRV.

It belongs to the universal ribosomal protein uS11 family. Part of the 30S ribosomal subunit. Interacts with proteins S7 and S18. Binds to IF-3.

In terms of biological role, located on the platform of the 30S subunit, it bridges several disparate RNA helices of the 16S rRNA. Forms part of the Shine-Dalgarno cleft in the 70S ribosome. This chain is Small ribosomal subunit protein uS11, found in Anaeromyxobacter sp. (strain Fw109-5).